Here is a 1469-residue protein sequence, read N- to C-terminus: snRNA-activating protein complex subunit 4 (1469 aa).

The disordered stretch occupies residues 16–82 (ELERILDPGS…DPKDKTLPED (67 aa)). The segment covering 24–36 (GSSGSHVEISESS) has biased composition (low complexity). The segment covering 37–53 (LESDSEADSLPSEDLDP) has biased composition (acidic residues). A Phosphoserine modification is found at Ser68. The interval 84-133 (ETCLQLNMVYQEVIQEKLAEANLLLAQNREQQEELMRDLAGSKGTKVKDG) is SNAPC5-binding. The Myb-like 1 domain maps to 250–288 (EEALLGNRLDSHDWEKISNINFEGSRSAEEIRKFWQNSE). In terms of domain architecture, HTH myb-type 1 spans 289 to 343 (HPSINKQEWSREEEERLQAIAAAHGHLEWQKIAEELGTSRSAFQCLQKFQQHNKA). A DNA-binding region (H-T-H motif) is located at residues 317 to 341 (WQKIAEELGTSRSAFQCLQKFQQHN). The 52-residue stretch at 344-395 (LKRKEWTEEEDRMLTQLVQEMRVGSHIPYRRIVYYMEGRDSMQLIYRWTKSL) folds into the Myb-like 2 domain. HTH myb-type domains follow at residues 396–451 (DPGL…HFSL) and 452–503 (KKGR…GKKQ). DNA-binding regions (H-T-H motif) lie at residues 424–447 (WFKI…LRRL) and 476–499 (WAKI…KIMM). Disordered stretches follow at residues 501–558 (KKQG…GDRA), 577–661 (QSTS…QALE), 685–710 (RSCT…SGDS), 834–894 (ASSS…KTVS), 932–981 (PLPH…DKRL), 1001–1051 (PAAS…PSPT), 1121–1167 (AAQG…PAEA), and 1184–1266 (IPEP…GPEK). Over residues 503–516 (QGLRRRRRRARHSV) the composition is skewed to basic residues. Positions 519-541 (SSTSSSGSSSGSSGGSSSSSSSS) are enriched in low complexity. A Phosphoserine modification is found at Ser599. A compositionally biased stretch (polar residues) spans 602 to 618 (KGSSASQGGSKEASTTA). The residue at position 626 (Ser626) is a Phosphoserine. Positions 932 to 944 (PLPHTPHGRPAPG) are enriched in pro residues. The span at 951 to 968 (PLSGPGAPAAAKPGTSGS) shows a compositional bias: low complexity. Residues 1014–1029 (ISVSCPESGLGQSQAP) show a composition bias toward polar residues. Positions 1039–1051 (EAPPFLPAAPSPT) are enriched in pro residues. The residue at position 1157 (Thr1157) is a Phosphothreonine. A compositionally biased stretch (basic and acidic residues) spans 1184 to 1195 (IPEPRTSSHADP). Ser1224 bears the Phosphoserine mark. Residues 1281–1393 (ATQQWLGGQR…QGVRTTLSVP (113 aa)) form an SNAPC2-binding region. Ser1398, Ser1400, and Ser1440 each carry phosphoserine. Residues 1430 to 1449 (APDSGKCSASSCLDTSNDPD) are disordered. A compositionally biased stretch (polar residues) spans 1436–1445 (CSASSCLDTS).

In terms of assembly, part of the SNAPc complex composed of 5 subunits: SNAPC1, SNAPC2, SNAPC3, SNAPC4 and SNAPC5. SNAPC4 interacts with SNAPC1, SNAPC2, SNAPC5, BRF2 and TBP.

It is found in the nucleus. Its function is as follows. Part of the SNAPc complex required for the transcription of both RNA polymerase II and III small-nuclear RNA genes. Binds to the proximal sequence element (PSE), a non-TATA-box basal promoter element common to these 2 types of genes. Recruits TBP and BRF2 to the U6 snRNA TATA box. The protein is snRNA-activating protein complex subunit 4 of Homo sapiens (Human).